Reading from the N-terminus, the 475-residue chain is Putative aldehyde dehydrogenase (475 aa).

Residues 146-147 (WN) and 223-224 (GS) each bind NAD(+). E245 functions as the Proton acceptor in the catalytic mechanism. L246 is an NAD(+) binding site. The active-site Nucleophile is C279. E379 contributes to the NAD(+) binding site.

It belongs to the aldehyde dehydrogenase family.

The catalysed reaction is an aldehyde + NAD(+) + H2O = a carboxylate + NADH + 2 H(+). This Staphylococcus aureus (strain MSSA476) protein is Putative aldehyde dehydrogenase.